Consider the following 364-residue polypeptide: MRYLFAGGGTGGHIYPAVAIAKEILKNEQDAQILFVGTEKGLEKELVPREGFELVTIEVQGFKRKLSFDTLKTVYKAFTGFKQANKILKDFKPHVVIGTGGYVCGPVLMAAVIKRIPTLIHEQNAFPGLTNRLLSPFVDIVAVSFEDSVKYFKKAKKVVVTGNPIREELLRVKKEEGREKLGFSMSKPLVVSVGGSRGAEKINSTMVELLKIKDRKFQVLIITGSSNYDKVLEKVKKENVVLDDSVKIVPYSHEMQYVYAAADIMICRAGAITLSEITAVGVPSILIPSPYVANNHQEYNARLLERQGAFHVILEKDLDAKKLYEKIEYLLSEPSLLNEMREKAKSMSRTDASYKIYQLVKTIT.

UDP-N-acetyl-alpha-D-glucosamine is bound by residues 10 to 12 (TGG), N124, R166, S196, and Q297.

Belongs to the glycosyltransferase 28 family. MurG subfamily.

The protein resides in the cell membrane. The enzyme catalyses di-trans,octa-cis-undecaprenyl diphospho-N-acetyl-alpha-D-muramoyl-L-alanyl-D-glutamyl-meso-2,6-diaminopimeloyl-D-alanyl-D-alanine + UDP-N-acetyl-alpha-D-glucosamine = di-trans,octa-cis-undecaprenyl diphospho-[N-acetyl-alpha-D-glucosaminyl-(1-&gt;4)]-N-acetyl-alpha-D-muramoyl-L-alanyl-D-glutamyl-meso-2,6-diaminopimeloyl-D-alanyl-D-alanine + UDP + H(+). Its pathway is cell wall biogenesis; peptidoglycan biosynthesis. Cell wall formation. Catalyzes the transfer of a GlcNAc subunit on undecaprenyl-pyrophosphoryl-MurNAc-pentapeptide (lipid intermediate I) to form undecaprenyl-pyrophosphoryl-MurNAc-(pentapeptide)GlcNAc (lipid intermediate II). This Caldanaerobacter subterraneus subsp. tengcongensis (strain DSM 15242 / JCM 11007 / NBRC 100824 / MB4) (Thermoanaerobacter tengcongensis) protein is UDP-N-acetylglucosamine--N-acetylmuramyl-(pentapeptide) pyrophosphoryl-undecaprenol N-acetylglucosamine transferase.